Reading from the N-terminus, the 705-residue chain is MKILKNCILLIIFGLLSTQLINADTDYCSLLENALMFYKMNRAGRLPDNDIPWRGNSALNDASPNSAKDANGDGNLSGGYFDAGDGVKFGLPMAYSMTMLGWSFIEYESNIAQCGLTSLYLDTIKYGTDWLIAAHTADNEFAGQVGDGNVDHSWWGPPEDMTMARPTYMLTTEAPGTEIAMEAASALAAASIAFKSSNPTYAATCLAHAKTLHNFGYTYRGVYSDSITNAQAFYNSWSGYKDDLVWGSIWLYKATQDSDYLTKAVADYASGGVGGMAQGNSHDWDNKAPGCCLLLSKLVPTTSTYKTDFEGWLNYWLPGGGVTYTPGGLAWIRQWGPARYAATAAFLGSLAGTEKGTDFTQKQVDYLIGNNPNQQSFVVGMGPNYPINPHHRAAHHSTTNDINNPVNNLYLLKGALVGGPGSNDEYTDDRTDYISNEVATDYNAGFVGALASLVNPSSTSVPTTTPTVTETPTETPTETPTETPTETPTETPTETPTETPTETPTETPTETPTETPTETPTETPTETPTETPTETPTETVTPTPTVTPTETPSSGESLSIYKSGLKNDFQDWSWGEHSLTDTTNVESGETNSISFTPKAYGAVFLGCFECIDTDTYNNIEFDINGGSSGAQLLRITVVKNSKSVGSKLITDLNGGTPIEANSWTKIKASFIDDFKVSGKVDGIWIQDIKGDTQSTVYISNIIATA.

An N-terminal signal peptide occupies residues 1 to 23; sequence MKILKNCILLIIFGLLSTQLINA. N75 carries an N-linked (GlcNAc...) asparagine glycan. D85 (nucleophile) is an active-site residue. Catalysis depends on residues H390, D428, and E437. The interval 455–556 is disordered; it reads NPSSTSVPTT…TPTETPSSGE (102 aa). A compositionally biased stretch (low complexity) spans 462 to 552; it reads PTTTPTVTET…TPTVTPTETP (91 aa). The tract at residues 463–552 is pro/Thr repeats ('hinge') (Pro/Thr box); that stretch reads TTTPTVTETP…TPTVTPTETP (90 aa).

Belongs to the glycosyl hydrolase 9 (cellulase E) family.

It carries out the reaction Endohydrolysis of (1-&gt;4)-beta-D-glucosidic linkages in cellulose, lichenin and cereal beta-D-glucans.. May digest the spore cell wall during germination, to release the enclosed amoeba. The polypeptide is Endoglucanase (celA) (Dictyostelium discoideum (Social amoeba)).